We begin with the raw amino-acid sequence, 294 residues long: 4-hydroxy-tetrahydrodipicolinate synthase (294 aa).

T47 serves as a coordination point for pyruvate. The Proton donor/acceptor role is filled by Y135. The Schiff-base intermediate with substrate role is filled by K163. A pyruvate-binding site is contributed by V205.

Belongs to the DapA family. In terms of assembly, homotetramer; dimer of dimers.

Its subcellular location is the cytoplasm. It catalyses the reaction L-aspartate 4-semialdehyde + pyruvate = (2S,4S)-4-hydroxy-2,3,4,5-tetrahydrodipicolinate + H2O + H(+). It functions in the pathway amino-acid biosynthesis; L-lysine biosynthesis via DAP pathway; (S)-tetrahydrodipicolinate from L-aspartate: step 3/4. Its function is as follows. Catalyzes the condensation of (S)-aspartate-beta-semialdehyde [(S)-ASA] and pyruvate to 4-hydroxy-tetrahydrodipicolinate (HTPA). The chain is 4-hydroxy-tetrahydrodipicolinate synthase from Rickettsia bellii (strain RML369-C).